The primary structure comprises 217 residues: Membrane-associated progesterone receptor component 2 (217 aa).

Serine 15 carries O-linked (Xyl...) (chondroitin sulfate) serine glycosylation. The helical transmembrane segment at 40–62 (ALLATGGEMLLNVALVALVLLGA) threads the bilayer. Phosphoserine is present on residues serine 84, serine 98, and serine 202. In terms of domain architecture, Cytochrome b5 heme-binding spans 96-195 (DFSLEQLRQY…EKYDYVGRLL (100 aa)). Positions 196 to 217 (KPGEEPSEYTDEEDTKDHSKQD) are disordered. Positions 200 to 209 (EPSEYTDEED) are enriched in acidic residues. Residue tyrosine 204 is modified to Phosphotyrosine. Threonine 205 carries the phosphothreonine modification.

It belongs to the cytochrome b5 family. MAPR subfamily. Interacts with PGRMC1. Interacts with AAAS. In terms of tissue distribution, expressed in brown adipose tissue, white adipose tissue, liver, heart, skeletal muscle, brain and adrenal gland.

The protein localises to the membrane. It is found in the nucleus envelope. Its subcellular location is the endoplasmic reticulum. It localises to the secreted. Its function is as follows. Required for the maintenance of uterine histoarchitecture and normal female reproductive lifespan. May serve as a universal non-classical progesterone receptor in the uterus. Intracellular heme chaperone required for delivery of labile, or signaling heme, to the nucleus. Plays a role in adipocyte function and systemic glucose homeostasis. In brown fat, which has a high demand for heme, delivery of labile heme in the nucleus regulates the activity of heme-responsive transcriptional repressors such as NR1D1 and BACH1. This Mus musculus (Mouse) protein is Membrane-associated progesterone receptor component 2.